The primary structure comprises 323 residues: GTP 3',8-cyclase (323 aa).

The 224-residue stretch at 5 to 228 (GFGRKVDYLR…TVLRDTSSPA (224 aa)) folds into the Radical SAM core domain. A GTP-binding site is contributed by R14. [4Fe-4S] cluster is bound by residues C21 and C25. Y27 serves as a coordination point for S-adenosyl-L-methionine. C28 contacts [4Fe-4S] cluster. Residue R64 coordinates GTP. Residue G68 coordinates S-adenosyl-L-methionine. T95 contributes to the GTP binding site. S119 serves as a coordination point for S-adenosyl-L-methionine. K155 contributes to the GTP binding site. M189 contacts S-adenosyl-L-methionine. Positions 250 and 253 each coordinate [4Fe-4S] cluster. 255–257 (RIR) serves as a coordination point for GTP. C267 lines the [4Fe-4S] cluster pocket. The span at 302–313 (KNKWSQKDDNEV) shows a compositional bias: basic and acidic residues. The segment at 302-323 (KNKWSQKDDNEVSTRAFYQTGG) is disordered.

Belongs to the radical SAM superfamily. MoaA family. Monomer and homodimer. [4Fe-4S] cluster is required as a cofactor.

The catalysed reaction is GTP + AH2 + S-adenosyl-L-methionine = (8S)-3',8-cyclo-7,8-dihydroguanosine 5'-triphosphate + 5'-deoxyadenosine + L-methionine + A + H(+). It participates in cofactor biosynthesis; molybdopterin biosynthesis. Catalyzes the cyclization of GTP to (8S)-3',8-cyclo-7,8-dihydroguanosine 5'-triphosphate. The sequence is that of GTP 3',8-cyclase from Aliarcobacter butzleri (strain RM4018) (Arcobacter butzleri).